A 788-amino-acid chain; its full sequence is Cell division cycle protein 27 homolog (788 aa).

Positions 198–436 are disordered; the sequence is YLDSPASSLK…PLPSVASSLN (239 aa). The segment covering 217-229 has biased composition (low complexity); sequence GPSSSSAASTAEP. 3 stretches are compositionally biased toward polar residues: residues 241 to 273, 293 to 303, and 319 to 360; these read RGTI…SRIN, SSVTGSRSSLF, and NRAN…NPVR. A compositionally biased stretch (low complexity) spans 366–378; that stretch reads ADAAAAANKTAKT. Polar residues predominate over residues 391–414; sequence VSRNSNLARSLSGSTNSVASTASE. TPR repeat units lie at residues 561-594, 596-628, 629-662, 664-696, and 731-764; these read PQSW…DKRF, YAYT…SPRD, YRAW…NPTN, AMLC…NPLD, and AFIF…DPRG.

The protein belongs to the APC3/CDC27 family. In terms of assembly, the APC/C complex is probably composed of at least 12 subunits: apc-2, apc-10, apc-11, cdc-26, emb-1, emb-27, emb-30, mat-1, mat-2, mat-3, such-1 and gfi-3. In terms of tissue distribution, expressed in the ventral nerve cord.

It localises to the nucleus. Its pathway is protein modification; protein ubiquitination. Functionally, probable component of the anaphase promoting complex/cyclosome (APC/C), a cell cycle-regulated E3 ubiquitin ligase that controls progression through mitosis and the G1 phase of the cell cycle. The APC/C complex acts by mediating ubiquitination and subsequent degradation of target proteins. Developmental role in early embryogenesis and the metaphase to anaphase transition in oocyte and spermatocyte meiosis and mitosis in germ cells. Required for embryonic anterior-posterior axis formation. Plays a role in regulating the abundance of glr-1 receptors in postmitotic neurons, which may in turn control animal locomotion. The chain is Cell division cycle protein 27 homolog from Caenorhabditis elegans.